We begin with the raw amino-acid sequence, 152 residues long: SsrA-binding protein (152 aa).

This sequence belongs to the SmpB family.

The protein localises to the cytoplasm. In terms of biological role, required for rescue of stalled ribosomes mediated by trans-translation. Binds to transfer-messenger RNA (tmRNA), required for stable association of tmRNA with ribosomes. tmRNA and SmpB together mimic tRNA shape, replacing the anticodon stem-loop with SmpB. tmRNA is encoded by the ssrA gene; the 2 termini fold to resemble tRNA(Ala) and it encodes a 'tag peptide', a short internal open reading frame. During trans-translation Ala-aminoacylated tmRNA acts like a tRNA, entering the A-site of stalled ribosomes, displacing the stalled mRNA. The ribosome then switches to translate the ORF on the tmRNA; the nascent peptide is terminated with the 'tag peptide' encoded by the tmRNA and targeted for degradation. The ribosome is freed to recommence translation, which seems to be the essential function of trans-translation. This is SsrA-binding protein from Rickettsia massiliae (strain Mtu5).